Reading from the N-terminus, the 446-residue chain is tRNA modification GTPase MnmE (446 aa).

(6S)-5-formyl-5,6,7,8-tetrahydrofolate-binding residues include Arg24, Glu81, and Lys120. Residues 216 to 368 form the TrmE-type G domain; that stretch reads GLHAVLIGPP…LHIRLRALAL (153 aa). Asn226 lines the K(+) pocket. Residues 226–231, 245–251, and 270–273 contribute to the GTP site; these read NAGKSS, TDVAGTT, and DTAG. Mg(2+) is bound at residue Ser230. Residues Thr245, Val247, and Thr250 each contribute to the K(+) site. Thr251 contributes to the Mg(2+) binding site. Residue Lys446 participates in (6S)-5-formyl-5,6,7,8-tetrahydrofolate binding.

This sequence belongs to the TRAFAC class TrmE-Era-EngA-EngB-Septin-like GTPase superfamily. TrmE GTPase family. Homodimer. Heterotetramer of two MnmE and two MnmG subunits. Requires K(+) as cofactor.

The protein localises to the cytoplasm. Functionally, exhibits a very high intrinsic GTPase hydrolysis rate. Involved in the addition of a carboxymethylaminomethyl (cmnm) group at the wobble position (U34) of certain tRNAs, forming tRNA-cmnm(5)s(2)U34. The chain is tRNA modification GTPase MnmE from Xanthomonas euvesicatoria pv. vesicatoria (strain 85-10) (Xanthomonas campestris pv. vesicatoria).